A 264-amino-acid chain; its full sequence is MRQYLDLLQHVLDNGADRSDRTGTGTRSVFGYQMRFDLARGFPVTTTKKLHLKSIIHELLWFLAGDTNIKYLTDHGVTIWDEWADENGDLGPVYGRQWRSWPDGHGGSIDQIAGLLKEIRRNPQSRRLIVSAWNPAEVEAMALPPCHCLFQFYVSEGRLSCQLYQRSADIFLGVPFNIASYALLTLMVAQVTGLKPGDFVHTLGDAHLYSNHFEQAREQLQRTPRALPTMWINPEVKDLFAFRFEDFRLENYVADASIQAPIAV.

R21 provides a ligand contact to dUMP. H51 serves as a coordination point for (6R)-5,10-methylene-5,6,7,8-tetrahydrofolate. A dUMP-binding site is contributed by 126-127 (RR). Residue C146 is the Nucleophile of the active site. DUMP-binding positions include 166–169 (RSAD), N177, and 207–209 (HLY). Position 169 (D169) interacts with (6R)-5,10-methylene-5,6,7,8-tetrahydrofolate. (6R)-5,10-methylene-5,6,7,8-tetrahydrofolate is bound at residue A263.

This sequence belongs to the thymidylate synthase family. Bacterial-type ThyA subfamily. Homodimer.

The protein resides in the cytoplasm. It carries out the reaction dUMP + (6R)-5,10-methylene-5,6,7,8-tetrahydrofolate = 7,8-dihydrofolate + dTMP. It functions in the pathway pyrimidine metabolism; dTTP biosynthesis. Functionally, catalyzes the reductive methylation of 2'-deoxyuridine-5'-monophosphate (dUMP) to 2'-deoxythymidine-5'-monophosphate (dTMP) while utilizing 5,10-methylenetetrahydrofolate (mTHF) as the methyl donor and reductant in the reaction, yielding dihydrofolate (DHF) as a by-product. This enzymatic reaction provides an intracellular de novo source of dTMP, an essential precursor for DNA biosynthesis. The protein is Thymidylate synthase of Mesorhizobium japonicum (strain LMG 29417 / CECT 9101 / MAFF 303099) (Mesorhizobium loti (strain MAFF 303099)).